The chain runs to 414 residues: tRNA (guanine-N(7)-)-methyltransferase non-catalytic subunit WDR4 (414 aa).

Position 2 is an N-acetylalanine (Ala2). WD repeat units lie at residues 60 to 99, 101 to 140, 144 to 184, and 187 to 227; these read QGSD…CLSV, TVVR…GGGR, GHLS…IESF, and GHTE…ELHC. The interval 377–414 is disordered; it reads EERLQQQLEKKRRQAPPPGPNGPTKKMRAGELAQGCSS.

Belongs to the WD repeat TRM82 family. As to quaternary structure, non-catalytic component of the METTL1-WDR4 complex, composed of METTL1 and WDR4. Interacts with FEN1; the interaction is direct.

The protein resides in the nucleus. The protein localises to the chromosome. It functions in the pathway tRNA modification; N(7)-methylguanine-tRNA biosynthesis. Functionally, non-catalytic component of the METTL1-WDR4 methyltransferase complex required for the formation of N(7)-methylguanine in a subset of RNA species, such as tRNAs, mRNAs and microRNAs (miRNAs). In the METTL1-WDR4 methyltransferase complex, WDR4 acts as a scaffold for tRNA-binding. Required for the formation of N(7)-methylguanine at position 46 (m7G46) in a large subset of tRNAs that contain the 5'-RAGGU-3' motif within the variable loop. M7G46 interacts with C13-G22 in the D-loop to stabilize tRNA tertiary structure and protect tRNAs from decay. Also required for the formation of N(7)-methylguanine at internal sites in a subset of mRNAs. Also required for methylation of a specific subset of miRNAs, such as let-7. Independently of METTL1, also plays a role in genome stability: localizes at the DNA replication site and regulates endonucleolytic activities of FEN1. This chain is tRNA (guanine-N(7)-)-methyltransferase non-catalytic subunit WDR4, found in Bos taurus (Bovine).